We begin with the raw amino-acid sequence, 113 residues long: MKLAELIELPKEQCNDKKCPHHGHLKVRGFFFKGKVIKKSDNKTVKIEIIRYYWLPKYERYELRRTRITAYLPECLKDIKEGDYVLIGETRPLSKTKHFVVLGKLKKGIALTQ.

Belongs to the universal ribosomal protein uS17 family. As to quaternary structure, part of the 30S ribosomal subunit.

One of the primary rRNA binding proteins, it binds specifically to the 5'-end of 16S ribosomal RNA. The chain is Small ribosomal subunit protein uS17 from Nanoarchaeum equitans (strain Kin4-M).